The primary structure comprises 402 residues: 26S proteasome non-ATPase regulatory subunit 4 homolog (402 aa).

Positions 5-189 (ATMICIDNSE…LSDVLISTPI (185 aa)) constitute a VWFA domain. Residues 221-240 (NVDPELALALRLSMEEERAR) enclose the UIM 1 domain. The segment covering 241-261 (QEAIAKKAAEESSGAENKDHA) has biased composition (basic and acidic residues). Disordered regions lie at residues 241–292 (QEAI…EDDD) and 302–321 (MSMEEGSSGAAAADAAMAEA). UIM domains follow at residues 291-310 (DDAQLLQQALAMSMEEGSSG) and 323-342 (VDDQDLALALQMSVQDAGGS). The disordered stretch occupies residues 363–402 (SLPGVDPNDPSVKDLLASLHGQGEQEKKEDKSDKPEDEKK). The segment covering 385 to 402 (GEQEKKEDKSDKPEDEKK) has biased composition (basic and acidic residues).

Belongs to the proteasome subunit S5A family. Component of the 19S regulatory particle (RP/PA700) base subcomplex of the 26S proteasome. The 26S proteasome is composed of a core protease (CP), known as the 20S proteasome, capped at one or both ends by the 19S regulatory particle (RP/PA700). The RP/PA700 complex is composed of at least 17 different subunits in two subcomplexes, the base and the lid, which form the portions proximal and distal to the 20S proteolytic core, respectively. Interacts with PI4KG4.

Plays a role in maintaining the structural integrity of the 19S regulatory particle (RP), subcomplex of the 26S proteasome. Plays a major role in both the direct and indirect recognition of ubiquitinated substrates of ubiquitin/26S proteasome-mediated proteolysis (UPP). Binds and presumably selects ubiquitin-conjugates for destruction. The polypeptide is 26S proteasome non-ATPase regulatory subunit 4 homolog (Oryza sativa subsp. japonica (Rice)).